A 225-amino-acid polypeptide reads, in one-letter code: Orotidine 5'-phosphate decarboxylase (225 aa).

Substrate is bound by residues Asp9, Lys31, 58–67, Thr115, Arg176, Gln184, Gly204, and Arg205; that span reads DLKLHDIPNT. Residue Lys60 is the Proton donor of the active site.

The protein belongs to the OMP decarboxylase family. Type 1 subfamily. Homodimer.

It catalyses the reaction orotidine 5'-phosphate + H(+) = UMP + CO2. Its pathway is pyrimidine metabolism; UMP biosynthesis via de novo pathway; UMP from orotate: step 2/2. Its function is as follows. Catalyzes the decarboxylation of orotidine 5'-monophosphate (OMP) to uridine 5'-monophosphate (UMP). The chain is Orotidine 5'-phosphate decarboxylase from Wolbachia sp. subsp. Brugia malayi (strain TRS).